The sequence spans 320 residues: Biotin synthase (320 aa).

One can recognise a Radical SAM core domain in the interval 45-274 (NDLQKASLLS…DSRIRLSAGR (230 aa)). 3 residues coordinate [4Fe-4S] cluster: cysteine 60, cysteine 64, and cysteine 67. [2Fe-2S] cluster contacts are provided by cysteine 105, cysteine 137, cysteine 197, and arginine 269.

It belongs to the radical SAM superfamily. Biotin synthase family. As to quaternary structure, homodimer. [4Fe-4S] cluster is required as a cofactor. Requires [2Fe-2S] cluster as cofactor.

The catalysed reaction is (4R,5S)-dethiobiotin + (sulfur carrier)-SH + 2 reduced [2Fe-2S]-[ferredoxin] + 2 S-adenosyl-L-methionine = (sulfur carrier)-H + biotin + 2 5'-deoxyadenosine + 2 L-methionine + 2 oxidized [2Fe-2S]-[ferredoxin]. It functions in the pathway cofactor biosynthesis; biotin biosynthesis; biotin from 7,8-diaminononanoate: step 2/2. Its function is as follows. Catalyzes the conversion of dethiobiotin (DTB) to biotin by the insertion of a sulfur atom into dethiobiotin via a radical-based mechanism. This is Biotin synthase from Beijerinckia indica subsp. indica (strain ATCC 9039 / DSM 1715 / NCIMB 8712).